Reading from the N-terminus, the 159-residue chain is Ribosomal RNA large subunit methyltransferase H (159 aa).

S-adenosyl-L-methionine contacts are provided by residues Leu76, Gly108, and 127–132 (FSRMTF).

The protein belongs to the RNA methyltransferase RlmH family. Homodimer.

Its subcellular location is the cytoplasm. The enzyme catalyses pseudouridine(1915) in 23S rRNA + S-adenosyl-L-methionine = N(3)-methylpseudouridine(1915) in 23S rRNA + S-adenosyl-L-homocysteine + H(+). Functionally, specifically methylates the pseudouridine at position 1915 (m3Psi1915) in 23S rRNA. The chain is Ribosomal RNA large subunit methyltransferase H from Clostridioides difficile (strain 630) (Peptoclostridium difficile).